Here is a 217-residue protein sequence, read N- to C-terminus: Thiamine-phosphate synthase (217 aa).

4-amino-2-methyl-5-(diphosphooxymethyl)pyrimidine is bound by residues 39–43 and Asn-71; that span reads QYRDK. Mg(2+) contacts are provided by Asp-72 and Asp-91. Residue Thr-110 participates in 4-amino-2-methyl-5-(diphosphooxymethyl)pyrimidine binding. 137-139 provides a ligand contact to 2-[(2R,5Z)-2-carboxy-4-methylthiazol-5(2H)-ylidene]ethyl phosphate; that stretch reads SHT. A 4-amino-2-methyl-5-(diphosphooxymethyl)pyrimidine-binding site is contributed by Lys-140. Gly-167 contacts 2-[(2R,5Z)-2-carboxy-4-methylthiazol-5(2H)-ylidene]ethyl phosphate.

It belongs to the thiamine-phosphate synthase family. Mg(2+) serves as cofactor.

The enzyme catalyses 2-[(2R,5Z)-2-carboxy-4-methylthiazol-5(2H)-ylidene]ethyl phosphate + 4-amino-2-methyl-5-(diphosphooxymethyl)pyrimidine + 2 H(+) = thiamine phosphate + CO2 + diphosphate. It catalyses the reaction 2-(2-carboxy-4-methylthiazol-5-yl)ethyl phosphate + 4-amino-2-methyl-5-(diphosphooxymethyl)pyrimidine + 2 H(+) = thiamine phosphate + CO2 + diphosphate. It carries out the reaction 4-methyl-5-(2-phosphooxyethyl)-thiazole + 4-amino-2-methyl-5-(diphosphooxymethyl)pyrimidine + H(+) = thiamine phosphate + diphosphate. It functions in the pathway cofactor biosynthesis; thiamine diphosphate biosynthesis; thiamine phosphate from 4-amino-2-methyl-5-diphosphomethylpyrimidine and 4-methyl-5-(2-phosphoethyl)-thiazole: step 1/1. In terms of biological role, condenses 4-methyl-5-(beta-hydroxyethyl)thiazole monophosphate (THZ-P) and 2-methyl-4-amino-5-hydroxymethyl pyrimidine pyrophosphate (HMP-PP) to form thiamine monophosphate (TMP). The protein is Thiamine-phosphate synthase of Alcanivorax borkumensis (strain ATCC 700651 / DSM 11573 / NCIMB 13689 / SK2).